The following is a 218-amino-acid chain: Sec-independent protein translocase protein TatB (218 aa).

Residues M1–G21 traverse the membrane as a helical segment. Disordered regions lie at residues A126 to K145 and S174 to R218. Over residues H199–R218 the composition is skewed to basic and acidic residues.

It belongs to the TatB family. The Tat system comprises two distinct complexes: a TatABC complex, containing multiple copies of TatA, TatB and TatC subunits, and a separate TatA complex, containing only TatA subunits. Substrates initially bind to the TatABC complex, which probably triggers association of the separate TatA complex to form the active translocon.

The protein localises to the cell inner membrane. Part of the twin-arginine translocation (Tat) system that transports large folded proteins containing a characteristic twin-arginine motif in their signal peptide across membranes. Together with TatC, TatB is part of a receptor directly interacting with Tat signal peptides. TatB may form an oligomeric binding site that transiently accommodates folded Tat precursor proteins before their translocation. This chain is Sec-independent protein translocase protein TatB, found in Yersinia enterocolitica serotype O:8 / biotype 1B (strain NCTC 13174 / 8081).